We begin with the raw amino-acid sequence, 476 residues long: Sedoheptulokinase (476 aa).

It belongs to the FGGY kinase family.

It is found in the cytoplasm. The enzyme catalyses sedoheptulose + ATP = D-sedoheptulose 7-phosphate + ADP + H(+). In terms of biological role, acts as a modulator of macrophage activation through control of glucose metabolism. The chain is Sedoheptulokinase (Shpk) from Mus musculus (Mouse).